The primary structure comprises 6885 residues: Nesprin-2 (6885 aa).

An actin-binding region spans residues 1–286 (MASSPELPTE…YVAQFLQYSK (286 aa)). Residues 1-6834 (MASSPELPTE…QRSFLSRVVR (6834 aa)) lie on the Cytoplasmic side of the membrane. Calponin-homology (CH) domains lie at 31–136 (DTQK…LHFH) and 181–286 (MSAR…QYSK). Spectrin repeat units follow at residues 297-378 (GKVK…HQIN), 379-472 (AWKI…RINN), 473-575 (ILEK…KNIY), 576-680 (NVKS…KQDQ), 735-838 (VAKD…KNLT), 839-932 (DVSP…LHHE), and 933-1034 (LSLY…KCAS). Positions 297 to 6782 (GKVKDAMGWL…PASPLPSFDE (6486 aa)) form a coiled coil. Serine 841 bears the Phosphoserine mark. The residue at position 955 (lysine 955) is an N6-acetyllysine. Over residues 1042–1059 (PTAGGTSKNEGTITTSEN) the composition is skewed to polar residues. A disordered region spans residues 1042-1084 (PTAGGTSKNEGTITTSENRGGDPHSEAPFAKSDNQPSTEKAME). Spectrin repeat units follow at residues 1121–1212 (TYRD…TLNT), 1263–1323 (NIQD…DTLK), 1324–1419 (ALED…YGVQ), 1420–1524 (EEFT…ALVT), 1525–1636 (ECLE…KTED), 1637–1738 (YYEN…TGES), 1739–1830 (NCHA…TKKS), 1831–1938 (VLQD…AKEL), 1939–2036 (EDSL…EEED), 2037–2132 (KLLP…LAST), 2133–2243 (YLSH…SVQN), and 2244–2360 (LDGH…LNSI). A compositionally biased stretch (basic and acidic residues) spans 2368-2382 (EKKGKFTLPGREKQA). The disordered stretch occupies residues 2368-2394 (EKKGKFTLPGREKQATSDVQESTQESA). The span at 2383-2393 (TSDVQESTQES) shows a compositional bias: polar residues. 16 Spectrin repeats span residues 2432–2513 (DERK…TLKK), 2514–2620 (NKES…KYSQ), 2621–2717 (QVVE…ETLE), 2718–2831 (PLHL…QLEF), 2832–2933 (KLEE…FIQN), 2934–3036 (TCNE…EKIK), 3037–3142 (QLDT…NMVL), 3143–3248 (ELSP…DLRT), 3249–3352 (NVLN…AQET), 3353–3465 (EAER…MWCE), 3466–3573 (ELKQ…KVQK), 3574–3679 (NKEL…SNEV), 3680–3777 (LKSS…ECRT), 3778–3880 (SQLN…KIME), 3881–3986 (SLPQ…VTQE), and 3987–4086 (QNEL…LPAV). At serine 2781 the chain carries Phosphoserine. 2 stretches are compositionally biased toward basic and acidic residues: residues 4073–4083 (QEQEGVERDRL) and 4093–4102 (VAERDASERK). Disordered regions lie at residues 4073–4162 (QEQE…SGTI), 4184–4232 (DSLN…KTRP), 4335–4363 (EKHS…PVNL), and 4416–4448 (HDND…QGQN). Phosphoserine is present on serine 4108. 2 stretches are compositionally biased toward basic and acidic residues: residues 4122-4134 (SSVK…EKAE) and 4144-4155 (WKHDKDMEEDRA). One copy of the Spectrin 36 repeat lies at 4229-4348 (KTRPEPTEVL…EDQHPTILKK (120 aa)). Basic and acidic residues predominate over residues 4335–4356 (EKHSEDQHPTILKKSSEPEHQE). A compositionally biased stretch (polar residues) spans 4421 to 4434 (TQESSASNQASSPE). Spectrin repeat units lie at residues 4520–4639 (NMTE…RSYQ), 4640–4727 (NEIK…RARY), 4728–4837 (TELS…QSLL), 4838–4943 (QKWE…QALL), 4944–5051 (KHLL…QEKL), 5052–5164 (HQLQ…KIQH), 5165–5266 (LEQL…TQVN), 5267–5391 (QLKT…KAYS), 5392–5487 (NAHG…MLLV), 5488–5589 (KANE…CSEL), 5590–5704 (QGIG…QWQD), 5705–5799 (FTTS…PQLA), 5800–5907 (EMIK…RVAI), 5908–6017 (RKQE…VKKL), 6018–6135 (KETF…EETW), 6136–6243 (RLWQ…LRHF), and 6244–6355 (TNQR…PGLE). Serine 5785 is subject to Phosphoserine. The segment covering 6354–6367 (LEDEKEASENETDM) has biased composition (acidic residues). Residues 6354-6508 (LEDEKEASEN…GTDGGKEGPR (155 aa)) form a disordered region. Phosphoserine is present on residues serine 6361, serine 6384, serine 6411, serine 6428, serine 6429, serine 6430, and serine 6459. The span at 6368–6384 (EDPREIQTDSWRKRGES) shows a compositional bias: basic and acidic residues. 3 Spectrin repeats span residues 6461–6549 (SCPE…KLKI), 6550–6665 (KQNL…QCQD), and 6666–6782 (FHQL…SFDE). The span at 6463–6474 (PEHHYKQMEGDR) shows a compositional bias: basic and acidic residues. A compositionally biased stretch (pro residues) spans 6477-6489 (PPVPPASSTPYKP). The span at 6490–6499 (PYGKLLLPPG) shows a compositional bias: low complexity. The interval 6769–6824 (GTQNPASPLPSFDEVDSGDQPPATSVPAPRAKQFRAVRTTEGEEETESRVPGSTRP) is disordered. The 60-residue stretch at 6826-6885 (RSFLSRVVRAALPLQLLLLLLLLLACLLPSSEEDYSCTQANNFARSFYPMLRYTNGPPPT) folds into the KASH domain. The chain crosses the membrane as a helical; Anchor for type IV membrane protein span at residues 6835-6855 (AALPLQLLLLLLLLLACLLPS). Topologically, residues 6856–6885 (SEEDYSCTQANNFARSFYPMLRYTNGPPPT) are perinuclear space. Positions 6872–6885 (FYPMLRYTNGPPPT) are sufficient for interaction with SUN2.

The protein belongs to the nesprin family. Core component of LINC complexes which are composed of inner nuclear membrane SUN domain-containing proteins coupled to outer nuclear membrane KASH domain-containing nesprins. SUN and KASH domain-containing proteins seem to bind each other promiscuously; however, some LINC complex constituents are tissue- or cell type-specific. At least SUN1/2-containing core LINC complexes are proposed to be hexameric composed of three protomers of each KASH and SUN domain-containing protein. The SUN2:SYNE2/KASH2 complex is a heterohexamer; the homotrimeric cloverleave-like conformation of the SUN domain is a prerequisite for LINC complex formation in which three separate SYNE2/KASH2 peptides bind at the interface of adjacent SUN domains. Interacts with EMD, LMNA, MKS3 and F-actin via its N-terminal domain. Interacts with DCTN1 and DYNC1I1/2; suggesting the association with the dynein-dynactin motor complex. Associates with kinesin motor complexes. Interacts with TMEM67. Interacts (via KASH domain) with TMEM258. Interacts with BROX; this interaction promotes SYN2 ubiquitination and facilitates the relaxation of mechanical stress imposed by compressive actin fibers at the rupture site. In terms of processing, the disulfid bond with SUN2 is required for stability of the SUN2:SYNE2/KASH2 LINC complex under tensile forces though not required for the interaction. Post-translationally, ubiquitinated, targeting it for degradation. Widely expressed, with higher level in kidney, adult and fetal liver, stomach and placenta. Weakly expressed in skeletal muscle and brain. Isoform 5 is highly expressed in pancreas, skeletal muscle and heart.

It localises to the nucleus outer membrane. Its subcellular location is the sarcoplasmic reticulum membrane. The protein localises to the cell membrane. The protein resides in the cytoplasm. It is found in the cytoskeleton. It localises to the mitochondrion. Its subcellular location is the nucleus. The protein localises to the nucleoplasm. The protein resides in the myofibril. It is found in the sarcomere. It localises to the z line. Its subcellular location is the cell junction. The protein localises to the focal adhesion. Functionally, multi-isomeric modular protein which forms a linking network between organelles and the actin cytoskeleton to maintain the subcellular spatial organization. As a component of the LINC (LInker of Nucleoskeleton and Cytoskeleton) complex involved in the connection between the nuclear lamina and the cytoskeleton. The nucleocytoplasmic interactions established by the LINC complex play an important role in the transmission of mechanical forces across the nuclear envelope and in nuclear movement and positioning. Specifically, SYNE2 and SUN2 assemble in arrays of transmembrane actin-associated nuclear (TAN) lines which are bound to F-actin cables and couple the nucleus to retrograde actin flow during actin-dependent nuclear movement. May be involved in nucleus-centrosome attachment. During interkinetic nuclear migration (INM) at G2 phase and nuclear migration in neural progenitors its LINC complex association with SUN1/2 and probable association with cytoplasmic dynein-dynactin motor complexes functions to pull the nucleus toward the centrosome; SYNE1 and SYNE2 may act redundantly. During INM at G1 phase mediates respective LINC complex association with kinesin to push the nucleus away from the centrosome. Involved in nuclear migration in retinal photoreceptor progenitors. Required for centrosome migration to the apical cell surface during early ciliogenesis. Facilitates the relaxation of mechanical stress imposed by compressive actin fibers at the rupture site through its nteraction with SYN2. The sequence is that of Nesprin-2 from Homo sapiens (Human).